The sequence spans 236 residues: Orotidine 5'-phosphate decarboxylase (236 aa).

Residues D14, K36, 63-72 (DLKFHDIPNT), T122, R183, Q192, G212, and R213 each bind substrate. The active-site Proton donor is K65.

The protein belongs to the OMP decarboxylase family. Type 1 subfamily. Homodimer.

It carries out the reaction orotidine 5'-phosphate + H(+) = UMP + CO2. Its pathway is pyrimidine metabolism; UMP biosynthesis via de novo pathway; UMP from orotate: step 2/2. Catalyzes the decarboxylation of orotidine 5'-monophosphate (OMP) to uridine 5'-monophosphate (UMP). The protein is Orotidine 5'-phosphate decarboxylase of Chromohalobacter salexigens (strain ATCC BAA-138 / DSM 3043 / CIP 106854 / NCIMB 13768 / 1H11).